A 261-amino-acid chain; its full sequence is Methyltransferase nsrG (261 aa).

Positions 49–141 are methyltransferase domain; sequence DVGAGNGPYA…AHQLRPGALF (93 aa).

Belongs to the methyltransferase superfamily.

Its pathway is secondary metabolite biosynthesis. Its function is as follows. Methyltransferase; part of the gene cluster that mediates the biosynthesis of the tetrahydroxanthone dimer neosartorin, which exhibits antibacterial activity. The two different monomeric units appear to be synthesized by the same set of enzymes, among which the Baeyer-Villiger monooxygenase nsrF is the key enzyme for the divergence of the biosynthetic routes. The pathway begins with the synthesis of atrochrysone thioester by the polyketide synthase nsrB. The atrochrysone carboxyl ACP thioesterase nsrC then breaks the thioester bond and releases the atrochrysone carboxylic acid from AacuL. Atrochrysone carboxylic acid is decarboxylated by the decarboxylase nsrE, and oxidized by the anthrone oxygenase nsrD to yield emodin. Emodin is then reduced to emodin hydroquinone by the oxidoreductase nsrR. A-ring reduction by the short chain dehydrogenase nsrJ, dehydration by the scytalone dehydratase-like protein nsrI and probable spontaneous re-oxidation, results in overall deoxygenation to chrysophanol. The Baeyer-Villiger monooxygenase nsrF accepts chrysophanol as a substrate to insert one oxygen atom at two different positions to yield the precursors of both monomric units. NsrF is promiscuous/flexible in interacting with the 2 (non methylated and methylated) aromatic rings of chrysophanol, thus diverging the biosynthetic pathway at this point. After the hydrolysis of the lactones, methylesterification by the methyltransferase nsrG yields respectively moniliphenone and 2,2',6'-trihydroxy-4-methyl-6-methoxya-cyldiphenylmethanone. The next steps are the hydroxylation by the FAD-dependent monooxygenase nsrK, followed by isomerization by the monooxygenase nsrQ. The short chain dehydrogenase/reductase nsrO then catalyzes the C-5 ketoreduction to give the xanthone skeleton of blennolide C and 5-acetylblennolide A. The acetyltransferase nsrL has a strict substrate specificity and uses only blennolide A but not blennolide C to yield 5-acetylblennolide A as the single-acetylated product. In the final step of the biosynthesis, the heterodimerization of the 2 xanthones, blennolide C and 5-acetylblennolide A, is catalyzed by the cytochrome P450 monooxygenase nsrP. NsrP can utilize at least three different xanthones as its substrates to perform the dimerization reaction. The chain is Methyltransferase nsrG from Aspergillus novofumigatus (strain IBT 16806).